Reading from the N-terminus, the 122-residue chain is Large ribosomal subunit protein uL14 (122 aa).

Belongs to the universal ribosomal protein uL14 family. In terms of assembly, part of the 50S ribosomal subunit. Forms a cluster with proteins L3 and L19. In the 70S ribosome, L14 and L19 interact and together make contacts with the 16S rRNA in bridges B5 and B8.

Binds to 23S rRNA. Forms part of two intersubunit bridges in the 70S ribosome. This Novosphingobium aromaticivorans (strain ATCC 700278 / DSM 12444 / CCUG 56034 / CIP 105152 / NBRC 16084 / F199) protein is Large ribosomal subunit protein uL14.